The chain runs to 376 residues: MAAKVCRSVLLLSRSSGAVASSAYPAFGVSSQRHQGTKTEALSMSLGGHQTVRRAHGLRTGGRCALFCHPSATLTAQGWKGSPSWQVQRLLCSPAAEDVSVVYQNGLPVISVRLPSRRERCQFTLKPLSDTVGVFLQQLQAEDRGIDRVTIYSADGARIASSTGIDILLMDNFKLVINDTSYLVQPPRRDLLPHEDGERLNDVKILVQQLYTTLRIEEHQLNKERELIGRLEDLNSQLQPLEKVKEELSKKAERRTTWVLWGGMAYMATQFGILARLTWWEYSWDIMEPVTYFITYGTAMAMYAYFVLTRQEYLYPDARDRQYLLFFHRGAKRTRFDIEKYNKLKDAIAEAELDLKRLRDPLQLNLPIQQIDTSKD.

The N-terminal 34 residues, 1–34 (MAAKVCRSVLLLSRSSGAVASSAYPAFGVSSQRH), are a transit peptide targeting the mitochondrion. At 35–257 (QGTKTEALSM…LSKKAERRTT (223 aa)) the chain is on the mitochondrial matrix side. The tract at residues 99–189 (VSVVYQNGLP…TSYLVQPPRR (91 aa)) is N-terminal MCU domain. Residues 213–254 (TLRIEEHQLNKERELIGRLEDLNSQLQPLEKVKEELSKKAER) adopt a coiled-coil conformation. Residues 258 to 280 (WVLWGGMAYMATQFGILARLTWW) form a helical membrane-spanning segment. Topologically, residues 281 to 289 (EYSWDIMEP) are mitochondrial intermembrane. Residues 284-292 (WDIMEPVTY) carry the Selectivity filter motif. Glutamate 288 contacts Ca(2+). A helical membrane pass occupies residues 290 to 309 (VTYFITYGTAMAMYAYFVLT). Residues 309 to 314 (TRQEYL) are juxtamembrane helix. Residues 310–376 (RQEYLYPDAR…PIQQIDTSKD (67 aa)) are Mitochondrial matrix-facing. Residues 336–363 (FDIEKYNKLKDAIAEAELDLKRLRDPLQ) are a coiled coil.

Belongs to the MCU (TC 1.A.77) family. As to quaternary structure, homotetramer. Component of the uniplex complex.

Its subcellular location is the mitochondrion inner membrane. It carries out the reaction Ca(2+)(in) = Ca(2+)(out). MCU channel activity is regulated by the heterodimer composed of micu1 and micu2, which act as calcium-sensors. At low calcium levels, micu1 occludes the pore of the MCU channel, preventing mitochondrial calcium uptake. At higher calcium levels, calcium-binding to micu1 and micu2 induces a conformational change that weakens mcu-micu1 interactions and moves the micu1-micu2 heterodimer away from the pore, allowing calcium permeation through the channel. MCU channel activity is gated by emre/smdt1 via the juxtamembrane helix loop. Inhibited by ruthenium red or its derivative Ru360. Its function is as follows. Channel-forming and calcium-conducting subunit of the mitochondrial inner membrane calcium uniporter complex (uniplex), which mediates calcium uptake into the mitochondrial matrix. Mcu channel activity is regulated by the calcium-sensor subunits of the uniplex micu1 and micu2. Mitochondrial calcium homeostasis plays key roles in cellular physiology and regulates ATP production, cytoplasmic calcium signals and activation of cell death pathways. Involved in buffering the amplitude of systolic calcium rises in cardiomyocytes. While dispensable for baseline homeostatic cardiac function, acts as a key regulator of short-term mitochondrial calcium loading underlying a 'fight-or-flight' response during acute stress: acts by mediating a rapid increase of mitochondrial calcium in pacemaker cells. Mitochondrial calcium uptake in skeletal muscle cells is involved in muscle size in adults. This chain is Calcium uniporter protein, mitochondrial, found in Danio rerio (Zebrafish).